A 303-amino-acid polypeptide reads, in one-letter code: Probable 5-dehydro-4-deoxyglucarate dehydratase (303 aa).

Belongs to the DapA family.

It catalyses the reaction 5-dehydro-4-deoxy-D-glucarate + H(+) = 2,5-dioxopentanoate + CO2 + H2O. Its pathway is carbohydrate acid metabolism; D-glucarate degradation; 2,5-dioxopentanoate from D-glucarate: step 2/2. The protein is Probable 5-dehydro-4-deoxyglucarate dehydratase of Acinetobacter baylyi (strain ATCC 33305 / BD413 / ADP1).